Consider the following 116-residue polypeptide: MAGRRGDSDEDLLKAVRLIKSLYQSNPPPSPEGTRQARRNRRRRWRERQRQIRRCSEWILDTYLGRSVDPVQLQLPPLERLTLDSSEDCGTSGTQGVGSPQVLVESPAVLESGAKE.

S8 is modified (phosphoserine; by host CK2). The homomultimerization stretch occupies residues 18–26 (LIKSLYQSN). Disordered stretches follow at residues 20–46 (KSLY…RRWR) and 84–116 (DSSE…GAKE). Residues 34–50 (TRQARRNRRRRWRERQR) carry the Nuclear localization signal and RNA-binding (RRE) motif. Over residues 36–46 (QARRNRRRRWR) the composition is skewed to basic residues. The Nuclear export signal and binding to XPO1 signature appears at 73-84 (LQLPPLERLTLD). The segment covering 88-98 (DCGTSGTQGVG) has biased composition (polar residues). Residues S92 and S99 each carry the phosphoserine; by host modification.

It belongs to the HIV-1 REV protein family. As to quaternary structure, homomultimer; when bound to the RRE. Multimeric assembly is essential for activity and may involve XPO1. Binds to human KPNB1, XPO1, TNPO1, RANBP5 and IPO7. Interacts with the viral Integrase. Interacts with human KHDRBS1. Interacts with human NAP1; this interaction decreases Rev multimerization and stimulates its activity. Interacts with human DEAD-box helicases DDX3 and DDX24; these interactions may serve for viral RNA export to the cytoplasm and packaging, respectively. Interacts with human PSIP1; this interaction may inhibit HIV-1 DNA integration by promoting dissociation of the Integrase-LEDGF/p75 complex. Post-translationally, asymmetrically arginine dimethylated at one site by host PRMT6. Methylation impairs the RNA-binding activity and export of viral RNA from the nucleus to the cytoplasm. Phosphorylated by protein kinase CK2. Presence of, and maybe binding to the N-terminus of the regulatory beta subunit of CK2 is necessary for CK2-mediated Rev's phosphorylation.

The protein localises to the host nucleus. It localises to the host nucleolus. It is found in the host cytoplasm. Its function is as follows. Escorts unspliced or incompletely spliced viral pre-mRNAs (late transcripts) out of the nucleus of infected cells. These pre-mRNAs carry a recognition sequence called Rev responsive element (RRE) located in the env gene, that is not present in fully spliced viral mRNAs (early transcripts). This function is essential since most viral proteins are translated from unspliced or partially spliced pre-mRNAs which cannot exit the nucleus by the pathway used by fully processed cellular mRNAs. Rev itself is translated from a fully spliced mRNA that readily exits the nucleus. Rev's nuclear localization signal (NLS) binds directly to KPNB1/Importin beta-1 without previous binding to KPNA1/Importin alpha-1. KPNB1 binds to the GDP bound form of RAN (Ran-GDP) and targets Rev to the nucleus. In the nucleus, the conversion from Ran-GDP to Ran-GTP dissociates Rev from KPNB1 and allows Rev's binding to the RRE in viral pre-mRNAs. Rev multimerization on the RRE via cooperative assembly exposes its nuclear export signal (NES) to the surface. Rev can then form a complex with XPO1/CRM1 and Ran-GTP, leading to nuclear export of the complex. Conversion from Ran-GTP to Ran-GDP mediates dissociation of the Rev/RRE/XPO1/RAN complex, so that Rev can return to the nucleus for a subsequent round of export. Beside KPNB1, also seems to interact with TNPO1/Transportin-1, RANBP5/IPO5 and IPO7/RANBP7 for nuclear import. The nucleoporin-like HRB/RIP is an essential cofactor that probably indirectly interacts with Rev to release HIV RNAs from the perinuclear region to the cytoplasm. This is Protein Rev from Human immunodeficiency virus type 1 group M subtype B (isolate RF/HAT3) (HIV-1).